Here is a 314-residue protein sequence, read N- to C-terminus: METQVVIMSGPKAISTGIAGLTDPGPGDLVVDIAYSGISTGTEKLFWLGTMPPFPGMGYPLVPGYESFGEVVQAAPDTGFRPGDHVFIPGANCFTGGLRGLFGGASKRLVTAASRVCRLDPAIGPEGALLALAATARHALAGFDNALPDLIVGHGTLGRLLARLTLAAGGKPPMVWETNPARRTGAVGYEVLDPEADPRRDYKAIYDASGAPGLIDQLVGRLGKGGELVLCGFYTVPVSFAFVPAFMKEMRLRIAAEWQPADLSATRALIESGALSLDGLITHRRPAAEAAEAYQTAFEDPDCLKMILDWKDAK.

It participates in porphyrin-containing compound metabolism; bacteriochlorophyll biosynthesis (light-independent). Its function is as follows. This protein catalyzes the penultimate step in bacteriochlorophyll a biosynthesis. The protein is 2-desacetyl-2-hydroxyethyl bacteriochlorophyllide A dehydrogenase (bchC) of Rhodobacter capsulatus (strain ATCC BAA-309 / NBRC 16581 / SB1003).